Consider the following 575-residue polypeptide: Probable methionine--tRNA ligase, mitochondrial (575 aa).

Positions 52 to 62 (FYVNGPPHIGH) match the 'HIGH' region motif. The 'KMSKS' region signature appears at 352–356 (KMSKS). K355 lines the ATP pocket.

The protein belongs to the class-I aminoacyl-tRNA synthetase family.

Its subcellular location is the mitochondrion matrix. It carries out the reaction tRNA(Met) + L-methionine + ATP = L-methionyl-tRNA(Met) + AMP + diphosphate. This Dictyostelium discoideum (Social amoeba) protein is Probable methionine--tRNA ligase, mitochondrial (mmetS).